The sequence spans 208 residues: uncharacterized protein (208 aa).

It to E.coli YfjJ.

This is an uncharacterized protein from Escherichia coli (strain K12).